A 234-amino-acid polypeptide reads, in one-letter code: Endonuclease NucS (234 aa).

It belongs to the NucS endonuclease family.

It localises to the cytoplasm. Functionally, cleaves both 3' and 5' ssDNA extremities of branched DNA structures. This Bifidobacterium animalis subsp. lactis (strain AD011) protein is Endonuclease NucS.